Here is a 521-residue protein sequence, read N- to C-terminus: DEAD-box ATP-dependent RNA helicase 1 (521 aa).

Positions Met1 to His20 are disordered. The Q motif signature appears at Cys36–Val65. The 231-residue stretch at Ile72–Leu302 folds into the Helicase ATP-binding domain. Ser85–Thr92 provides a ligand contact to ATP. The short motif at Asp213–Asp216 is the DEAD box element. Residues Ser330–Leu480 form the Helicase C-terminal domain. A compositionally biased stretch (basic and acidic residues) spans Leu495–Asp507. The disordered stretch occupies residues Leu495 to Thr521.

Belongs to the DEAD box helicase family. DDX51/DBP6 subfamily.

It carries out the reaction ATP + H2O = ADP + phosphate + H(+). In Oryza sativa subsp. japonica (Rice), this protein is DEAD-box ATP-dependent RNA helicase 1.